Consider the following 109-residue polypeptide: Cell division suppressor protein YneA (109 aa).

In terms of domain architecture, LysM spans 39 to 90 (SEVNVNEGDSLWALADQYAGKSDMAKADFVSWVEKENNLSDGHVEAGDSVVI).

This sequence belongs to the YneA family.

It localises to the cytoplasm. Functionally, inhibits cell division during the SOS response. Affects a later stage of the cell division protein assembly, after the assembly of the Z ring, by probably suppressing recruitment of FtsL and/or DivIC to the division machinery. This chain is Cell division suppressor protein YneA, found in Listeria monocytogenes serovar 1/2a (strain ATCC BAA-679 / EGD-e).